Here is a 318-residue protein sequence, read N- to C-terminus: Nodulation protein D 2 (318 aa).

The region spanning 6–63 (LDLNLLVALDALTTERNLTAAARSINLSQPAMSAAIGRLRDYFRDELFTMNGRELRLT) is the HTH lysR-type domain. Residues 23-42 (LTAAARSINLSQPAMSAAIG) constitute a DNA-binding region (H-T-H motif).

It belongs to the LysR transcriptional regulatory family.

Functionally, nodD regulates the expression of the nodABCFE genes which encode other nodulation proteins. NodD is also a negative regulator of its own expression. Binds flavonoids as inducers. In Rhizobium leguminosarum bv. phaseoli, this protein is Nodulation protein D 2 (nodD2).